The chain runs to 361 residues: Homocitrate synthase (361 aa).

The 251-residue stretch at 1–251 (MVLDSTLREG…KYRLDLLYRV (251 aa)) folds into the Pyruvate carboxyltransferase domain. Residue Arg-8 coordinates 2-oxoglutarate. Glu-9 provides a ligand contact to Mg(2+). The 2-oxoglutarate site is built by His-68, Arg-128, and Thr-162. Positions 188 and 190 each coordinate Mg(2+). His-282 acts as the Proton acceptor in catalysis.

Belongs to the alpha-IPM synthase/homocitrate synthase family. Homocitrate synthase LYS20/LYS21 subfamily. It depends on Mg(2+) as a cofactor. Mn(2+) serves as cofactor.

It carries out the reaction acetyl-CoA + 2-oxoglutarate + H2O = (2R)-homocitrate + CoA + H(+). It participates in amino-acid biosynthesis; L-lysine biosynthesis via AAA pathway; L-alpha-aminoadipate from 2-oxoglutarate: step 1/5. Catalyzes the aldol-type condensation of 2-oxoglutarate with acetyl-CoA to yield homocitrate. Carries out the first step of the alpha-aminoadipate (AAA) lysine biosynthesis pathway. The chain is Homocitrate synthase from Pyrococcus abyssi (strain GE5 / Orsay).